The chain runs to 489 residues: uncharacterized protein (489 aa).

4 disordered regions span residues 1-94 (MIEE…GSLD), 109-229 (NRNQ…SDDD), 300-389 (DDNI…TSIQ), and 428-461 (SESGRSISSPILIPSPTLSSKSNNQENDDPTLVK). 2 stretches are compositionally biased toward low complexity: residues 43-53 (LLVQQSNQSVK) and 64-77 (SNGFNNNNSSNIHD). Acidic residues predominate over residues 121–138 (NFSEDDEDDDAEDDDSSD). Residues 144-154 (KKNKPKKPSKL) show a composition bias toward basic residues. The span at 155-164 (MKHDSVDGKN) shows a compositional bias: basic and acidic residues. A compositionally biased stretch (basic residues) spans 173–199 (SKKKVQHQLKEKNKKKGIKNDKKKSKP). Residues 308-343 (NDNDNDNDDDNDNDNDNDNDNDNDNDDDENGEDNGE) are compositionally biased toward acidic residues. Low complexity-rich tracts occupy residues 344-389 (DLNI…TSIQ) and 433-449 (SISSPILIPSPTLSSKS).

This is an uncharacterized protein from Dictyostelium discoideum (Social amoeba).